Reading from the N-terminus, the 397-residue chain is 8-amino-7-oxononanoate synthase (397 aa).

Substrate is bound at residue R23. 110–111 is a pyridoxal 5'-phosphate binding site; it reads GY. H135 provides a ligand contact to substrate. Pyridoxal 5'-phosphate contacts are provided by S181, H209, and T237. An N6-(pyridoxal phosphate)lysine modification is found at K240. Substrate is bound at residue T354.

Belongs to the class-II pyridoxal-phosphate-dependent aminotransferase family. BioF subfamily. In terms of assembly, homodimer. The cofactor is pyridoxal 5'-phosphate.

The enzyme catalyses 6-carboxyhexanoyl-[ACP] + L-alanine + H(+) = (8S)-8-amino-7-oxononanoate + holo-[ACP] + CO2. It participates in cofactor biosynthesis; biotin biosynthesis. In terms of biological role, catalyzes the decarboxylative condensation of pimeloyl-[acyl-carrier protein] and L-alanine to produce 8-amino-7-oxononanoate (AON), [acyl-carrier protein], and carbon dioxide. This is 8-amino-7-oxononanoate synthase from Anaeromyxobacter sp. (strain Fw109-5).